The following is a 187-amino-acid chain: Cytokinin riboside 5'-monophosphate phosphoribohydrolase (187 aa).

An Isoglutamyl lysine isopeptide (Lys-Gln) (interchain with Q-Cter in protein Pup) cross-link involves residue Lys74. Residues Glu80, 98 to 99 (RK), 115 to 121 (GVGTLDE), and Thr127 each bind substrate.

It belongs to the LOG family. Homodimer. In terms of processing, pupylated at Lys-74 by the prokaryotic ubiquitin-like protein Pup, which leads to its degradation by the proteasome. The proteasomal control of cytokinin synthesis is essential to protect M.tuberculosis against host-produced NO.

It catalyses the reaction N(6)-(dimethylallyl)adenosine 5'-phosphate + H2O = N(6)-dimethylallyladenine + D-ribose 5-phosphate. The enzyme catalyses 9-ribosyl-trans-zeatin 5'-phosphate + H2O = trans-zeatin + D-ribose 5-phosphate. Functionally, catalyzes the hydrolytic removal of ribose 5'-monophosphate from nitrogen N6-modified adenosines, the final step of bioactive cytokinin synthesis. Is involved in the synthesis of isopentenyladenine (iP) and 2-methylthio-iP (2MeS-iP), the most abundant cytokinins detected in M.tuberculosis lysates and supernatants. Is also able to convert trans-zeatin-riboside monophosphate (tZRMP) to trans-zeatin (tZ) in vitro; however, it may not be involved in the biosynthesis of this minor cytokinin in vivo. Accumulation of Rv1205 sensitizes M.tuberculosis to nitric oxide since cytokinin breakdown products synergize with NO to kill M.tuberculosis. Shows a slow AMP hydrolase activity, but is not able to hydrolyze ATP. Displays no lysine decarboxylase (LDC) activity (L-lysine conversion to cadaverine). The protein is Cytokinin riboside 5'-monophosphate phosphoribohydrolase of Mycobacterium tuberculosis (strain ATCC 25618 / H37Rv).